The chain runs to 62 residues: SVNPCCDPVICKPRDGEHCISGPCCNNCKFLNSGTICQRARGDGNHDYCTGITTDCPRNRYN.

The Disintegrin domain maps to 1–62 (SVNPCCDPVI…TTDCPRNRYN (62 aa)). Cystine bridges form between C5–C28, C19–C25, C24–C49, and C37–C56. The Cell attachment site motif lies at 41–43 (RGD).

It belongs to the disintegrin family. Dimeric disintegrin subfamily. As to quaternary structure, heterodimer with subunit B; disulfide-linked. As to expression, expressed by the venom gland.

The protein resides in the secreted. In terms of biological role, may bind to both alpha-IIb/beta-3 (ITGA2B/ITGB3) and alpha-V/beta-3 (ITGAV/ITGB3) integrins, and may inhibit platelet aggregation. The chain is Disintegrin schistatin-like subunit A from Echis carinatus (Saw-scaled viper).